Here is a 423-residue protein sequence, read N- to C-terminus: Histidine--tRNA ligase 2 (423 aa).

It belongs to the class-II aminoacyl-tRNA synthetase family. In terms of assembly, homodimer.

Its subcellular location is the cytoplasm. It catalyses the reaction tRNA(His) + L-histidine + ATP = L-histidyl-tRNA(His) + AMP + diphosphate + H(+). This is Histidine--tRNA ligase 2 from Bacillus cereus (strain ATCC 14579 / DSM 31 / CCUG 7414 / JCM 2152 / NBRC 15305 / NCIMB 9373 / NCTC 2599 / NRRL B-3711).